A 212-amino-acid polypeptide reads, in one-letter code: Dephospho-CoA kinase (212 aa).

Positions 8–212 (LVGVTGGLGS…QLLQQAMLRR (205 aa)) constitute a DPCK domain. 16–21 (GSGKSM) lines the ATP pocket.

It belongs to the CoaE family.

The protein resides in the cytoplasm. The enzyme catalyses 3'-dephospho-CoA + ATP = ADP + CoA + H(+). It functions in the pathway cofactor biosynthesis; coenzyme A biosynthesis; CoA from (R)-pantothenate: step 5/5. In terms of biological role, catalyzes the phosphorylation of the 3'-hydroxyl group of dephosphocoenzyme A to form coenzyme A. The polypeptide is Dephospho-CoA kinase (Chlorobium chlorochromatii (strain CaD3)).